Reading from the N-terminus, the 233-residue chain is Attacin-B (233 aa).

An N-terminal signal peptide occupies residues 1-17 (MFAKLFLVSVLLVGVNS). The propeptide occupies 18–46 (RYVLVEEPGYYDKQYEEQPQQWVNSRVRR).

It belongs to the attacin/sarcotoxin-2 family.

The protein localises to the secreted. Its function is as follows. Hemolymph antibacterial protein. The protein is Attacin-B of Hyalophora cecropia (Cecropia moth).